We begin with the raw amino-acid sequence, 723 residues long: Catalase-peroxidase (723 aa).

The tryptophyl-tyrosyl-methioninium (Trp-Tyr) (with M-251) cross-link spans 97-225 (WHAAGSYRVT…LAAVQMGLIY (129 aa)). The Proton acceptor role is filled by H98. Residues 225-251 (YVNPEGVNGKSDPLATAAQMRETFARM) constitute a cross-link (tryptophyl-tyrosyl-methioninium (Tyr-Met) (with W-97)). Heme b is bound at residue H266.

It belongs to the peroxidase family. Peroxidase/catalase subfamily. As to quaternary structure, homodimer or homotetramer. Heme b serves as cofactor. In terms of processing, formation of the three residue Trp-Tyr-Met cross-link is important for the catalase, but not the peroxidase activity of the enzyme.

The catalysed reaction is H2O2 + AH2 = A + 2 H2O. The enzyme catalyses 2 H2O2 = O2 + 2 H2O. Functionally, bifunctional enzyme with both catalase and broad-spectrum peroxidase activity. This chain is Catalase-peroxidase, found in Agrobacterium fabrum (strain C58 / ATCC 33970) (Agrobacterium tumefaciens (strain C58)).